Consider the following 1438-residue polypeptide: DNA polymerase III PolC-type (1438 aa).

An Exonuclease domain is found at 422 to 578 (YVVFDVETTG…YDTEATAYIF (157 aa)).

It belongs to the DNA polymerase type-C family. PolC subfamily.

It localises to the cytoplasm. The enzyme catalyses DNA(n) + a 2'-deoxyribonucleoside 5'-triphosphate = DNA(n+1) + diphosphate. Functionally, required for replicative DNA synthesis. This DNA polymerase also exhibits 3' to 5' exonuclease activity. This chain is DNA polymerase III PolC-type, found in Staphylococcus aureus (strain MRSA252).